Reading from the N-terminus, the 791-residue chain is Metabotropic glutamate receptor-like protein D (791 aa).

Residues 1–22 form the signal peptide; it reads MKINSFLIILILLFISIKNSNG. At 23 to 390 the chain is on the extracellular side; sequence EPEKKFKLIT…TEVYQSRPIQ (368 aa). 6 N-linked (GlcNAc...) asparagine glycosylation sites follow: Asn72, Asn168, Asn279, Asn290, Asn306, and Asn349. A helical transmembrane segment spans residues 391-411; that stretch reads IAISSISSFFIVTVLVMMGLV. Over 412-424 the chain is Cytoplasmic; sequence VRFRKNPSIRSAS. A helical membrane pass occupies residues 425-445; the sequence is PIFLNFILFGALIIYVGIIIW. The Extracellular portion of the chain corresponds to 446–453; sequence SSSINSAS. The chain crosses the membrane as a helical span at residues 454–474; sequence CNAQFWLVTLGFTTLIGSLVV. Topologically, residues 475 to 495 are cytoplasmic; the sequence is KNVRIWLIFDNPELKLVKITN. The chain crosses the membrane as a helical span at residues 496–516; that stretch reads LQLVPWVGVCLVINIILMSIL. Residues 517–550 lie on the Extracellular side of the membrane; sequence TSVGDLREVNAQGIDSLGKYEFMRICKMNSSGAS. Asn545 carries an N-linked (GlcNAc...) asparagine glycan. Residues 551 to 571 traverse the membrane as a helical segment; that stretch reads TLYTILAYFAALLLIGVFVSW. At 572–585 the chain is on the cytoplasmic side; sequence KIRIVDILEFNESK. Residues 586–606 form a helical membrane-spanning segment; sequence AIANTLYAISFCLFVIVPLMI. The Extracellular portion of the chain corresponds to 607–615; it reads SPQDKQSEK. A helical transmembrane segment spans residues 616–636; sequence IILCIAGLFIVTAAVLIIFVP. Topologically, residues 637-791 are cytoplasmic; that stretch reads KFYRVYIFGS…KNEENNDGDN (155 aa). 2 disordered regions span residues 664–715 and 746–791; these read TARA…SEPN and IITE…DGDN. The span at 674–689 shows a compositional bias: gly residues; the sequence is SSGGGAGSGGATGGSG. The segment covering 749–760 has biased composition (low complexity); the sequence is ENGQDSNNNNNN. Residues 752–781 adopt a coiled-coil conformation; sequence QDSNNNNNNEENKDNNIENNKISEEIKENL. Residues 761 to 785 are compositionally biased toward basic and acidic residues; sequence EENKDNNIENNKISEEIKENLKNEE.

It in the N-terminal section; belongs to the BMP lipoprotein family. The protein in the C-terminal section; belongs to the G-protein coupled receptor 3 family. GABA-B receptor subfamily.

Its subcellular location is the membrane. This Dictyostelium discoideum (Social amoeba) protein is Metabotropic glutamate receptor-like protein D (grlD).